Reading from the N-terminus, the 116-residue chain is Large ribosomal subunit protein uL22c (116 aa).

The protein belongs to the universal ribosomal protein uL22 family. In terms of assembly, part of the 50S ribosomal subunit.

It localises to the plastid. It is found in the chloroplast. Functionally, this protein binds specifically to 23S rRNA. The globular domain of the protein is located near the polypeptide exit tunnel on the outside of the subunit, while an extended beta-hairpin is found that lines the wall of the exit tunnel in the center of the 70S ribosome. This is Large ribosomal subunit protein uL22c (rpl22) from Euglena gracilis.